The primary structure comprises 243 residues: Sec-independent protein translocase protein TatC (243 aa).

The next 7 membrane-spanning stretches (helical) occupy residues valine 18 to aspartate 38, isoleucine 70 to phenylalanine 90, methionine 106 to phenylalanine 126, phenylalanine 132 to serine 152, phenylalanine 153 to isoleucine 173, tyrosine 191 to serine 211, and leucine 213 to isoleucine 233.

The protein belongs to the TatC family. As to quaternary structure, forms a complex with TatA.

It is found in the cell membrane. Functionally, part of the twin-arginine translocation (Tat) system that transports large folded proteins containing a characteristic twin-arginine motif in their signal peptide across membranes. In Carboxydothermus hydrogenoformans (strain ATCC BAA-161 / DSM 6008 / Z-2901), this protein is Sec-independent protein translocase protein TatC.